Consider the following 403-residue polypeptide: Argininosuccinate synthase (403 aa).

ATP is bound by residues 10–18 (AYSGGVDTS) and alanine 38. Tyrosine 89 lines the L-citrulline pocket. Position 119 (glycine 119) interacts with ATP. Positions 121, 125, and 126 each coordinate L-aspartate. Asparagine 125 is a binding site for L-citrulline. Positions 129, 177, 186, 262, and 274 each coordinate L-citrulline.

Belongs to the argininosuccinate synthase family. Type 1 subfamily. Homotetramer.

It is found in the cytoplasm. It catalyses the reaction L-citrulline + L-aspartate + ATP = 2-(N(omega)-L-arginino)succinate + AMP + diphosphate + H(+). It functions in the pathway amino-acid biosynthesis; L-arginine biosynthesis; L-arginine from L-ornithine and carbamoyl phosphate: step 2/3. The sequence is that of Argininosuccinate synthase from Synechococcus sp. (strain CC9902).